The following is a 470-amino-acid chain: Cyclic AMP-responsive element-binding protein 3-like protein 3 (470 aa).

Residues 1-319 (MDGDISTGKM…TSKPAHAGTC (319 aa)) are Cytoplasmic-facing. Residues 59-145 (SDSDEFLNSI…PEPPRTQVHE (87 aa)) form a disordered region. Residues 239-302 (VLKKIRRKIR…LSLLEQLKHL (64 aa)) enclose the bZIP domain. A basic motif region spans residues 241–270 (KKIRRKIRNKQSAQESRKKKKEYIDGLENR). The leucine-zipper stretch occupies residues 281-302 (LQRKVLHLEKQNLSLLEQLKHL). Lys290 is covalently cross-linked (Glycyl lysine isopeptide (Lys-Gly) (interchain with G-Cter in ubiquitin)). A helical; Signal-anchor for type II membrane protein transmembrane segment spans residues 320–340 (IAVLLLSFVLIILPSISPFTA). Residues 341–470 (NKVDSPGDFI…RVVQDALGVL (130 aa)) lie on the Lumenal side of the membrane. Residues Asn410 and Asn417 are each glycosylated (N-linked (GlcNAc...) asparagine).

It belongs to the bZIP family. ATF subfamily. As to quaternary structure, binds DNA as a dimer. May form homodimers. Interacts with ATF6. Interacts with SYNV1/HRD1; this interaction leads to CREB3L3 ubiquitination and proteasomal degradation. Post-translationally, controlled by regulated intramembrane proteolysis (RIP). Following ER stress a fragment containing the cytoplasmic transcription factor domain is released by proteolysis. The cleavage seems to be performed sequentially by site-1 and site-2 proteases (PS1 and PS2). N-glycosylation is required for optimal proteolytic activation. In terms of processing, ubiquitinated at Lys-290 by SYNV1/HRD1 via 'Lys-27'-linked ubiquitin.

Its subcellular location is the endoplasmic reticulum membrane. The protein resides in the nucleus. Transcription factor that may act during endoplasmic reticulum stress by activating unfolded protein response target genes. Activated in response to cAMP stimulation. Binds the cAMP response element (CRE). Activates transcription through box-B element and CRE. Seems to function synergistically with ATF6. In acute inflammatory response, may activate expression of acute phase response (APR) genes. May be involved in growth suppression. Regulates FGF21 transcription. Plays a crucial role in the regulation of triglyceride metabolism and is required for the maintenance of normal plasma triglyceride concentrations. The sequence is that of Cyclic AMP-responsive element-binding protein 3-like protein 3 (Creb3l3) from Rattus norvegicus (Rat).